Reading from the N-terminus, the 346-residue chain is UDP-N-acetylenolpyruvoylglucosamine reductase (346 aa).

One can recognise an FAD-binding PCMH-type domain in the interval 23–194 (FDVRAQFACR…TSVTFRLPKV (172 aa)). R170 is an active-site residue. The Proton donor role is filled by S246. Residue E342 is part of the active site.

Belongs to the MurB family. It depends on FAD as a cofactor.

It localises to the cytoplasm. The enzyme catalyses UDP-N-acetyl-alpha-D-muramate + NADP(+) = UDP-N-acetyl-3-O-(1-carboxyvinyl)-alpha-D-glucosamine + NADPH + H(+). It functions in the pathway cell wall biogenesis; peptidoglycan biosynthesis. Functionally, cell wall formation. This is UDP-N-acetylenolpyruvoylglucosamine reductase from Paraburkholderia phytofirmans (strain DSM 17436 / LMG 22146 / PsJN) (Burkholderia phytofirmans).